Here is a 188-residue protein sequence, read N- to C-terminus: Putative manganese efflux pump MntP (188 aa).

6 helical membrane-spanning segments follow: residues 3-23 (LYAL…VALA), 35-55 (IAAT…AGWV), 63-83 (FISE…GLKM), 104-126 (WMTV…GLAF), 140-160 (MAAT…GVLF), and 167-187 (AGGL…LGLI).

The protein belongs to the MntP (TC 9.B.29) family.

Its subcellular location is the cell inner membrane. Functionally, probably functions as a manganese efflux pump. This Neisseria gonorrhoeae (strain ATCC 700825 / FA 1090) protein is Putative manganese efflux pump MntP.